We begin with the raw amino-acid sequence, 328 residues long: Phosphoserine phosphatase (328 aa).

D113 acts as the Nucleophile in catalysis. Positions 113 and 115 each coordinate Mg(2+). D115 functions as the Proton donor in the catalytic mechanism. Substrate contacts are provided by residues E122, R158, 201-202, and K246; that span reads SG. A Mg(2+)-binding site is contributed by D269. N272 provides a ligand contact to substrate.

The protein belongs to the HAD-like hydrolase superfamily. SerB family. Mg(2+) is required as a cofactor.

It carries out the reaction O-phospho-L-serine + H2O = L-serine + phosphate. It catalyses the reaction O-phospho-D-serine + H2O = D-serine + phosphate. It functions in the pathway amino-acid biosynthesis; L-serine biosynthesis; L-serine from 3-phospho-D-glycerate: step 3/3. This is Phosphoserine phosphatase from Vibrio cholerae serotype O1 (strain ATCC 39315 / El Tor Inaba N16961).